We begin with the raw amino-acid sequence, 272 residues long: Universal stress protein MT2699 (272 aa).

ATP is bound by residues glycine 15, glycine 109–arginine 115, and serine 123–threonine 124.

This sequence belongs to the universal stress protein A family.

The protein is Universal stress protein MT2699 of Mycobacterium tuberculosis (strain CDC 1551 / Oshkosh).